The following is a 248-amino-acid chain: tRNA uridine(34) hydroxylase (248 aa).

The 95-residue stretch at 127–221 (RGRPLVLLDT…YFEEVGGEGY (95 aa)) folds into the Rhodanese domain. C181 serves as the catalytic Cysteine persulfide intermediate.

It belongs to the TrhO family.

The enzyme catalyses uridine(34) in tRNA + AH2 + O2 = 5-hydroxyuridine(34) in tRNA + A + H2O. Functionally, catalyzes oxygen-dependent 5-hydroxyuridine (ho5U) modification at position 34 in tRNAs. The protein is tRNA uridine(34) hydroxylase of Xanthomonas euvesicatoria pv. vesicatoria (strain 85-10) (Xanthomonas campestris pv. vesicatoria).